A 309-amino-acid chain; its full sequence is Ecotin-like protein 3 (309 aa).

The tract at residues 140–309 (QQELEAPAVS…KSGRDSRRNS (170 aa)) is disordered. The segment covering 156–167 (VRERQNNPEGHA) has biased composition (basic and acidic residues). A compositionally biased stretch (low complexity) spans 168-180 (HPVVVHSVESPEV). The segment covering 181 to 190 (SGHKDGDQPM) has biased composition (basic and acidic residues). Residues 196 to 205 (LKQSCSNSSR) show a composition bias toward low complexity. A compositionally biased stretch (polar residues) spans 209–221 (HSASGSSPKNTPL). Residues 261 to 279 (SDSTSSRKDDQDSGYEKKV) are compositionally biased toward basic and acidic residues. A compositionally biased stretch (low complexity) spans 290–299 (SSPKRSASPK).

This sequence belongs to the protease inhibitor I11 (ecotin) family.

This is Ecotin-like protein 3 from Leishmania braziliensis.